Reading from the N-terminus, the 314-residue chain is E3 ubiquitin-protein ligase CHIP (314 aa).

Residues 1–11 show a composition bias toward basic and acidic residues; it reads MKGKEEREREG. The segment at 1-47 is disordered; it reads MKGKEEREREGGGGAVGPGAAGPGAGGGSPEKSHSAQEHKEQGNRLF. A compositionally biased stretch (gly residues) spans 12 to 29; the sequence is GGGAVGPGAAGPGAGGGS. The segment covering 31–43 has biased composition (basic and acidic residues); sequence EKSHSAQEHKEQG. TPR repeat units lie at residues 36-69, 70-103, and 105-137; these read AQEH…NPLV, AVYY…DGQS, and KAHF…AKEQ. The 75-residue stretch at 237 to 311 folds into the U-box domain; sequence DIPDYLCGKI…DAFISENGWV (75 aa).

Homodimer.

Its subcellular location is the cytoplasm. It is found in the nucleus. The protein localises to the mitochondrion. The enzyme catalyses S-ubiquitinyl-[E2 ubiquitin-conjugating enzyme]-L-cysteine + [acceptor protein]-L-lysine = [E2 ubiquitin-conjugating enzyme]-L-cysteine + N(6)-ubiquitinyl-[acceptor protein]-L-lysine.. Its function is as follows. E3 ubiquitin-protein ligase which targets misfolded chaperone substrates towards proteasomal degradation. Collaborates with ATXN3 in the degradation of misfolded chaperone substrates: ATXN3 restricting the length of ubiquitin chain attached to STUB1/CHIP substrates and preventing further chain extension. The protein is E3 ubiquitin-protein ligase CHIP of Gallus gallus (Chicken).